The chain runs to 316 residues: Pantothenate kinase (316 aa).

95-102 (GSVAVGKS) is an ATP binding site.

The protein belongs to the prokaryotic pantothenate kinase family.

It localises to the cytoplasm. It catalyses the reaction (R)-pantothenate + ATP = (R)-4'-phosphopantothenate + ADP + H(+). It participates in cofactor biosynthesis; coenzyme A biosynthesis; CoA from (R)-pantothenate: step 1/5. This chain is Pantothenate kinase, found in Shigella boydii serotype 18 (strain CDC 3083-94 / BS512).